The primary structure comprises 469 residues: Glutamate--tRNA ligase (469 aa).

The 'HIGH' region signature appears at 11-21 (PSPTGFIHLGN). The segment covering 118-131 (GEKPRYDGTWRPEP) has biased composition (basic and acidic residues). The interval 118–139 (GEKPRYDGTWRPEPGKVLPEPP) is disordered. The 'KMSKS' region motif lies at 243 to 247 (KMSKR). Lysine 246 contributes to the ATP binding site.

This sequence belongs to the class-I aminoacyl-tRNA synthetase family. Glutamate--tRNA ligase type 1 subfamily. Monomer.

It localises to the cytoplasm. It carries out the reaction tRNA(Glu) + L-glutamate + ATP = L-glutamyl-tRNA(Glu) + AMP + diphosphate. Its function is as follows. Catalyzes the attachment of glutamate to tRNA(Glu) in a two-step reaction: glutamate is first activated by ATP to form Glu-AMP and then transferred to the acceptor end of tRNA(Glu). The chain is Glutamate--tRNA ligase from Burkholderia mallei (strain NCTC 10247).